Here is a 567-residue protein sequence, read N- to C-terminus: Dynein, 70 kDa intermediate chain, flagellar outer arm (567 aa).

WD repeat units follow at residues 214-254 (VPTS…GPVE), 261-302 (SHRD…ECVE), 360-399 (GHHG…KTPI), and 404-444 (YHPT…NEPT).

This sequence belongs to the dynein intermediate chain family. As to quaternary structure, consists of at least 3 heavy chains (alpha, beta and gamma), 2 intermediate chains and 8 light chains.

It is found in the cytoplasm. The protein resides in the cytoskeleton. Its subcellular location is the flagellum axoneme. Its function is as follows. May play a role in regulating dynein heavy chain (DHC) activity. May function in holding IC78 to the DHC, or in stabilizing the entire dynein complex. This is Dynein, 70 kDa intermediate chain, flagellar outer arm (ODA6) from Chlamydomonas reinhardtii (Chlamydomonas smithii).